The following is a 210-amino-acid chain: Orotate phosphoribosyltransferase (210 aa).

5-phospho-alpha-D-ribose 1-diphosphate contacts are provided by residues Arg94, Lys98, His100, and 120-128 (EDLISTGGS). Residue Ser124 coordinates orotate.

This sequence belongs to the purine/pyrimidine phosphoribosyltransferase family. PyrE subfamily. In terms of assembly, homodimer. Requires Mg(2+) as cofactor.

The catalysed reaction is orotidine 5'-phosphate + diphosphate = orotate + 5-phospho-alpha-D-ribose 1-diphosphate. Its pathway is pyrimidine metabolism; UMP biosynthesis via de novo pathway; UMP from orotate: step 1/2. Functionally, catalyzes the transfer of a ribosyl phosphate group from 5-phosphoribose 1-diphosphate to orotate, leading to the formation of orotidine monophosphate (OMP). The polypeptide is Orotate phosphoribosyltransferase (Bacillus mycoides (strain KBAB4) (Bacillus weihenstephanensis)).